A 718-amino-acid chain; its full sequence is D-(-)-3-hydroxybutyrate oligomer hydrolase (718 aa).

The Charge relay system role is filled by serine 320.

This sequence belongs to the D-(-)-3-hydroxybutyrate oligomer hydrolase family.

Its subcellular location is the cytoplasm. It carries out the reaction (3R)-hydroxybutanoate dimer + H2O = 2 (R)-3-hydroxybutanoate + H(+). Its pathway is lipid metabolism; butanoate metabolism. Its activity is regulated as follows. Inhibited by diisopropylfluorophosphate (DFP). Its function is as follows. Participates in the degradation of poly-3-hydroxybutyrate (PHB). It works downstream of poly(3-hydroxybutyrate) depolymerase, hydrolyzing D(-)-3-hydroxybutyrate oligomers of various length (3HB-oligomers) into 3HB-monomers. Seems to have also poly(3-hydroxybutyrate) depolymerase activity since it is able to release 3HB-monomers from artificial amorphous PHB. The chain is D-(-)-3-hydroxybutyrate oligomer hydrolase (phaZ2) from Cupriavidus necator (strain ATCC 17699 / DSM 428 / KCTC 22496 / NCIMB 10442 / H16 / Stanier 337) (Ralstonia eutropha).